The chain runs to 980 residues: Serine/threonine-protein phosphatase 4 regulatory subunit 3 (980 aa).

One can recognise a WH1 domain in the interval 1 to 105 (MTTDTRRRVK…EKICQVQGKD (105 aa)). 3 disordered regions span residues 640-668 (RDKM…RQME), 695-861 (VSEK…SLCD), and 885-980 (VTAA…ARQA). Positions 695 to 708 (VSEKNGPQTQNQQK) are enriched in polar residues. Low complexity-rich tracts occupy residues 709–749 (SSPP…SSSP), 757–789 (QTQA…QQTQ), 803–859 (EAPQ…AASL), and 885–926 (VTAA…SPAS). Polar residues predominate over residues 929–939 (QDANSTEGTSS). A compositionally biased stretch (basic and acidic residues) spans 940-951 (EADKTTAKKGLV). Acidic residues predominate over residues 953–968 (YESDSGEDDYEEDEYS).

This sequence belongs to the SMEK family. Serine/threonine-protein phosphatase 4 (PP4) occurs in different assemblies of the catalytic and one or more regulatory subunits. Probably part of a PP4 PPP4C-PPP4R2-PPP4R3 complex containing Pp4-19C, PPP4R2r and flfl. Interacts with mira. As to expression, expressed in neuroblasts.

It localises to the nucleus. Its subcellular location is the membrane. It is found in the cytoplasm. Functionally, regulatory subunit of serine/threonine-protein phosphatase 4. The probable PP4 complex Pp4-19C-PPP4R2r-flfl (PPP4C-PPP4R2-PPP4R3) is required to prevent caspase induced cell death (in vitro). May be involved in DNA damage repair. Key mediator specific for the localization of mira and associated cell fate determinants during both interphase and mitosis. Nuclear Flfl is required to exclude mira/pros from the nucleus when inefficiently bound to the cytoskeleton/cortex, whereas cytosolic or membrane-associated flfl is required for the cortical association and asymmetric localization of mira/pros/brat/stau at metaphase and anaphase. In Drosophila melanogaster (Fruit fly), this protein is Serine/threonine-protein phosphatase 4 regulatory subunit 3 (flfl).